Consider the following 582-residue polypeptide: La-related protein 7 (582 aa).

Met-1 is subject to N-acetylmethionine. The tract at residues 1-27 is disordered; sequence METESGNQEKVMEEESTEKKKEVEKKK. Residues 10–25 are compositionally biased toward basic and acidic residues; the sequence is KVMEEESTEKKKEVEK. In terms of domain architecture, HTH La-type RNA-binding spans 28–122; it reads RSRVKQVLAD…KPLGERPKDE (95 aa). Positions 125 to 203 constitute an RRM domain; the sequence is RTVYVELLPK…PRKPGIFPKT (79 aa). 2 disordered regions span residues 188 to 368 and 410 to 442; these read NPPE…ERHK and KSESEMETDSGVPQNTGMKNEKTANREECRTQE. The segment covering 219–228 has biased composition (basic residues); that stretch reads KKKKKKKGRM. Residues 229–240 are compositionally biased toward basic and acidic residues; that stretch reads KKEDNIQAKEEN. A Glycyl lysine isopeptide (Lys-Gly) (interchain with G-Cter in SUMO2) cross-link involves residue Lys-237. Residue Thr-257 is modified to Phosphothreonine. Phosphoserine is present on residues Ser-258, Ser-261, Ser-273, Ser-298, Ser-299, and Ser-300. The span at 316–335 shows a compositional bias: basic and acidic residues; it reads IQKDIIKEASEASKENRDIE. The residue at position 337 (Ser-337) is a Phosphoserine. Phosphothreonine is present on Thr-338. Residue Ser-351 is modified to Phosphoserine. Positions 354 to 367 are enriched in basic residues; the sequence is KTKRKHKKKHKERH. Lys-410 participates in a covalent cross-link: Glycyl lysine isopeptide (Lys-Gly) (interchain with G-Cter in SUMO2). Residues 428-442 are compositionally biased toward basic and acidic residues; that stretch reads KNEKTANREECRTQE. Positions 450-563 constitute a xRRM domain; the sequence is QFVSGVIVKI…TEKLITKAEK (114 aa).

This sequence belongs to the LARP7 family. Core component of the 7SK RNP complex, at least composed of 7SK RNA, LARP7, MEPCE, HEXIM1 (or HEXIM2) and P-TEFb (composed of CDK9 and CCNT1/cyclin-T1). Interacts with METTL16. Interacts with RBM7; upon genotoxic stress this interaction is enhanced, triggering the release of inactive P-TEFb complex from the core, yielding to P-TEFb complex activation. Associates with box C/D small nucleolar ribonucleoprotein (snoRNP) complexes.

The protein resides in the nucleus. It localises to the nucleoplasm. Its function is as follows. RNA-binding protein that specifically binds distinct small nuclear RNA (snRNAs) and regulates their processing and function. Specifically binds the 7SK snRNA (7SK RNA) and acts as a core component of the 7SK ribonucleoprotein (RNP) complex, thereby acting as a negative regulator of transcription elongation by RNA polymerase II. The 7SK RNP complex sequesters the positive transcription elongation factor b (P-TEFb) in a large inactive 7SK RNP complex preventing RNA polymerase II phosphorylation and subsequent transcriptional elongation. The 7SK RNP complex also promotes snRNA gene transcription by RNA polymerase II via interaction with the little elongation complex (LEC). LARP7 specifically binds to the highly conserved 3'-terminal U-rich stretch of 7SK RNA; on stimulation, remains associated with 7SK RNA, whereas P-TEFb is released from the complex. LARP7 also acts as a regulator of mRNA splicing fidelity by promoting U6 snRNA processing. Specifically binds U6 snRNAs and associates with a subset of box C/D RNP complexes: promotes U6 snRNA 2'-O-methylation by facilitating U6 snRNA loading into box C/D RNP complexes. U6 snRNA 2'-O-methylation is required for mRNA splicing fidelity. Binds U6 snRNAs with a 5'-CAGGG-3' sequence motif. U6 snRNA processing is required for spermatogenesis. This chain is La-related protein 7, found in Homo sapiens (Human).